Consider the following 300-residue polypeptide: Ribosomal protein bS6--L-glutamate ligase (300 aa).

The region spanning L104 to E287 is the ATP-grasp domain. ATP-binding positions include K141, E178–Y179, D187, and R211–N213. 3 residues coordinate Mg(2+): D248, E260, and N262. The Mn(2+) site is built by D248, E260, and N262.

It belongs to the RimK family. Mg(2+) is required as a cofactor. Mn(2+) serves as cofactor.

An L-glutamate ligase that catalyzes the ATP-dependent post-translational addition of glutamate residues to the C-terminus of ribosomal protein bS6 (RpsF). Is also able to catalyze the synthesis of poly-alpha-glutamate in vitro, via ATP hydrolysis from unprotected glutamate as substrate. The number of glutamate residues added to either RpsF or to poly-alpha-glutamate changes with pH. The polypeptide is Ribosomal protein bS6--L-glutamate ligase (Salmonella agona (strain SL483)).